The sequence spans 521 residues: Bifunctional purine biosynthesis protein PurH (521 aa).

Positions 1 to 145 (MIKQALISVS…KNHRDVTVVV (145 aa)) constitute an MGS-like domain.

This sequence belongs to the PurH family.

The enzyme catalyses (6R)-10-formyltetrahydrofolate + 5-amino-1-(5-phospho-beta-D-ribosyl)imidazole-4-carboxamide = 5-formamido-1-(5-phospho-D-ribosyl)imidazole-4-carboxamide + (6S)-5,6,7,8-tetrahydrofolate. It catalyses the reaction IMP + H2O = 5-formamido-1-(5-phospho-D-ribosyl)imidazole-4-carboxamide. Its pathway is purine metabolism; IMP biosynthesis via de novo pathway; 5-formamido-1-(5-phospho-D-ribosyl)imidazole-4-carboxamide from 5-amino-1-(5-phospho-D-ribosyl)imidazole-4-carboxamide (10-formyl THF route): step 1/1. The protein operates within purine metabolism; IMP biosynthesis via de novo pathway; IMP from 5-formamido-1-(5-phospho-D-ribosyl)imidazole-4-carboxamide: step 1/1. This is Bifunctional purine biosynthesis protein PurH from Burkholderia cenocepacia (strain HI2424).